The sequence spans 357 residues: 4-hydroxy-3-methylbut-2-en-1-yl diphosphate synthase (flavodoxin) (357 aa).

[4Fe-4S] cluster is bound by residues C265, C268, C300, and E307.

Belongs to the IspG family. In terms of assembly, homodimer. It depends on [4Fe-4S] cluster as a cofactor.

It carries out the reaction (2E)-4-hydroxy-3-methylbut-2-enyl diphosphate + oxidized [flavodoxin] + H2O + 2 H(+) = 2-C-methyl-D-erythritol 2,4-cyclic diphosphate + reduced [flavodoxin]. The protein operates within isoprenoid biosynthesis; isopentenyl diphosphate biosynthesis via DXP pathway; isopentenyl diphosphate from 1-deoxy-D-xylulose 5-phosphate: step 5/6. Converts 2C-methyl-D-erythritol 2,4-cyclodiphosphate (ME-2,4cPP) into 1-hydroxy-2-methyl-2-(E)-butenyl 4-diphosphate. In Aquifex aeolicus (strain VF5), this protein is 4-hydroxy-3-methylbut-2-en-1-yl diphosphate synthase (flavodoxin).